The sequence spans 254 residues: D-aminoacyl-tRNA deacylase (254 aa).

The segment at 61 to 82 (KPTLTVHTPGNLTDDNSHGGNP) is disordered. The span at 65-74 (TVHTPGNLTD) shows a compositional bias: polar residues.

The protein belongs to the DtdA deacylase family. In terms of assembly, monomer. Zn(2+) serves as cofactor.

The catalysed reaction is a D-aminoacyl-tRNA + H2O = a tRNA + a D-alpha-amino acid + H(+). It carries out the reaction glycyl-tRNA(Ala) + H2O = tRNA(Ala) + glycine + H(+). Its function is as follows. D-aminoacyl-tRNA deacylase with broad substrate specificity. By recycling D-aminoacyl-tRNA to D-amino acids and free tRNA molecules, this enzyme counteracts the toxicity associated with the formation of D-aminoacyl-tRNA entities in vivo. The chain is D-aminoacyl-tRNA deacylase from Methanococcus maripaludis (strain DSM 14266 / JCM 13030 / NBRC 101832 / S2 / LL).